The following is a 3133-amino-acid chain: Hemocytin (3133 aa).

The TIL 1 domain maps to 40 to 96; that stretch reads CTGGQQYTVCADSCLRKCSDTALAASGQCKPVCVEGCACSPSQLLDDNGVCVPVAKC. Residue Asn151 is glycosylated (N-linked (GlcNAc...) asparagine). The 57-residue stretch at 153–209 folds into the TIL 2 domain; sequence TAQNMEFTTCETSEPLTCKNMHLPPSTQTAECRPGCQCKKGQVLDTASKRCVPATQC. N-linked (GlcNAc...) asparagine glycosylation is present at Asn237. Residues 247–418 form the VWFD 1 domain; the sequence is GVCGAWGDSH…DSWKLKPTCP (172 aa). 3 cysteine pairs are disulfide-bonded: Cys249-Cys380, Cys271-Cys417, and Cys295-Cys302. Residues 509-576 form the TIL 3 domain; sequence CDEVCSNYDS…TTECVPRAKC (68 aa). N-linked (GlcNAc...) asparagine glycosylation occurs at Asn564. A disordered region spans residues 661–680; it reads PDGQSVESEPLPKPNELQIG. The 68-residue stretch at 770–837 folds into the TIL 4 domain; that stretch reads CPPGEVYQAC…ERTCVPVKDC (68 aa). Residues 899 to 924 are disordered; it reads STTTTTTTSTTTTTTTPEPTETTTET. Intrachain disulfides connect Cys940–Cys1095 and Cys1116–Cys1254. F5/8 type C domains are found at residues 940-1095 and 1116-1254; these read CSPD…IIGC and CTEP…PIGC. N-linked (GlcNAc...) asparagine glycosylation is found at Asn1170, Asn1387, Asn1622, Asn1727, and Asn1847. The 176-residue stretch at 1619–1794 folds into the VWFD 2 domain; sequence VFCNMTGRTF…KPGVPADACA (176 aa). Disulfide bonds link Cys1621–Cys1754 and Cys1641–Cys1793. The TIL 5 domain occupies 1890–1948; that stretch reads CPPPLVHYDCYRKRCEETCAPYPNAARACPAQEGQCSPGCYCPDGKLRKGDQCVLPADC. The region spanning 1951–2136 is the VWFD 3 domain; it reads CTCTGVGTPA…WQASPEKLTE (186 aa). 2 disulfides stabilise this stretch: Cys1953–Cys2099 and Cys2001–Cys2009. 2 N-linked (GlcNAc...) asparagine glycosylation sites follow: Asn1975 and Asn1985. 5 N-linked (GlcNAc...) asparagine glycosylation sites follow: Asn2093, Asn2113, Asn2161, Asn2276, and Asn2451. The region spanning 2229–2285 is the TIL 6 domain; that stretch reads CEEPFVYRACVDCERTCDNYEQLQTSPEKCTNKPVEGCFCPEGKVRVNNTCIEPGKC. Residues 2553–2622 form the VWFC 1 domain; it reads VACRHQDNVY…DSGQCCGKCE (70 aa). Residues Asn2647, Asn2654, Asn2663, Asn2794, Asn2810, Asn2865, Asn2929, Asn2964, and Asn3028 are each glycosylated (N-linked (GlcNAc...) asparagine). The VWFC 2 domain maps to 2842 to 2907; the sequence is VACRDGDKIY…AADHCCGRCV (66 aa). 4 disulfides stabilise this stretch: Cys2971-Cys3040, Cys2991-Cys3054, Cys3004-Cys3070, and Cys3020-Cys3072. Residues 2971–3076 enclose the CTCK domain; sequence CNEKPQALSK…PARCHCAACG (106 aa).

Post-translationally, may be converted into the 260 kDa mature hemocytin by proteolysis.

Adhesive protein and relates to hemostasis or encapsulation of foreign substances for self-defense. The polypeptide is Hemocytin (Bombyx mori (Silk moth)).